The chain runs to 68 residues: Serine rich endogenous peptide 13 (68 aa).

Positions 1–31 (MATKASNLVVFLLSLLLLFLLISFQVGVADA) are cleaved as a signal peptide. Residues 33–68 (RNKRQGQEQRVDYDYPRPPTAPIYLPPSKSRKGKGP) form a disordered region. The span at 37-47 (QGQEQRVDYDY) shows a compositional bias: basic and acidic residues. Residues 48–57 (PRPPTAPIYL) are compositionally biased toward pro residues. An SCOOP motif motif is present at residues 54 to 68 (PIYLPPSKSRKGKGP). A SxS motif essential for MIK2 binding motif is present at residues 60-62 (SKS).

Belongs to the serine rich endogenous peptide (SCOOP) phytocytokine family. In terms of assembly, interacts with MIK2 (via extracellular leucine-rich repeat domain); this interaction triggers the formation of complex between MIK2 and the BAK1/SERK3 and SERK4 coreceptors, and subsequent BAK1 activation by phosphorylation. In terms of tissue distribution, mostly expressed in stems and flowers and, to a lower extent, in seedlings shoots, roots, siliques, seeds and leaves.

It is found in the cell membrane. The protein resides in the secreted. Its subcellular location is the extracellular space. The protein localises to the apoplast. In terms of biological role, brassicaceae-specific phytocytokine (plant endogenous peptide released into the apoplast) perceived by MIK2 in a BAK1/SERK3 and SERK4 coreceptors-dependent manner, that modulates various physiological and antimicrobial processes including growth prevention and reactive oxygen species (ROS) response regulation. Promotes the expression of immune-related marker genes (e.g. WRKY30, WRKY33 and CYP81F2) in a MIK2-dependent manner. Inhibits root growth and regulates root meristems. Prevents general growth and development. Exhibits antibacterial effects against Pseudomonas syringae pv. tomato DC3000, Ralstonia solanacearum, Bacillus subtilis and Agrobacterium tumefaciens, thus being an antimicrobial peptide (AMP). In Arabidopsis thaliana (Mouse-ear cress), this protein is Serine rich endogenous peptide 13.